Consider the following 945-residue polypeptide: Isoleucine--tRNA ligase 1 (945 aa).

The 'HIGH' region signature appears at 66–76 (PYANGDIHLGH). Glu581 provides a ligand contact to L-isoleucyl-5'-AMP. The 'KMSKS' region signature appears at 622–626 (KMSKS). Position 625 (Lys625) interacts with ATP. Zn(2+) is bound by residues Cys908, Cys911, Cys928, and Cys931.

Belongs to the class-I aminoacyl-tRNA synthetase family. IleS type 1 subfamily. In terms of assembly, monomer. It depends on Zn(2+) as a cofactor.

The protein resides in the cytoplasm. It carries out the reaction tRNA(Ile) + L-isoleucine + ATP = L-isoleucyl-tRNA(Ile) + AMP + diphosphate. In terms of biological role, catalyzes the attachment of isoleucine to tRNA(Ile). As IleRS can inadvertently accommodate and process structurally similar amino acids such as valine, to avoid such errors it has two additional distinct tRNA(Ile)-dependent editing activities. One activity is designated as 'pretransfer' editing and involves the hydrolysis of activated Val-AMP. The other activity is designated 'posttransfer' editing and involves deacylation of mischarged Val-tRNA(Ile). The sequence is that of Isoleucine--tRNA ligase 1 from Burkholderia pseudomallei (strain K96243).